We begin with the raw amino-acid sequence, 232 residues long: Ubiquinone biosynthesis O-methyltransferase (232 aa).

Positions 36, 55, 76, and 120 each coordinate S-adenosyl-L-methionine.

This sequence belongs to the methyltransferase superfamily. UbiG/COQ3 family.

It carries out the reaction a 3-demethylubiquinol + S-adenosyl-L-methionine = a ubiquinol + S-adenosyl-L-homocysteine + H(+). The catalysed reaction is a 3-(all-trans-polyprenyl)benzene-1,2-diol + S-adenosyl-L-methionine = a 2-methoxy-6-(all-trans-polyprenyl)phenol + S-adenosyl-L-homocysteine + H(+). It participates in cofactor biosynthesis; ubiquinone biosynthesis. Its function is as follows. O-methyltransferase that catalyzes the 2 O-methylation steps in the ubiquinone biosynthetic pathway. In Pseudomonas entomophila (strain L48), this protein is Ubiquinone biosynthesis O-methyltransferase.